The following is a 245-amino-acid chain: Zinc import ATP-binding protein ZnuC (245 aa).

The 218-residue stretch at 27–244 (LTADSLTLFY…AKFLSVFPNN (218 aa)) folds into the ABC transporter domain. Residue 59-66 (GPNGGGKT) participates in ATP binding.

It belongs to the ABC transporter superfamily. Zinc importer (TC 3.A.1.15.5) family. As to quaternary structure, the complex is composed of two ATP-binding proteins (ZnuC), two transmembrane proteins (ZnuB) and a solute-binding protein (ZnuA).

The protein localises to the cell inner membrane. The enzyme catalyses Zn(2+)(out) + ATP(in) + H2O(in) = Zn(2+)(in) + ADP(in) + phosphate(in) + H(+)(in). In terms of biological role, part of the ABC transporter complex ZnuABC involved in zinc import. Responsible for energy coupling to the transport system. The sequence is that of Zinc import ATP-binding protein ZnuC from Anaplasma marginale (strain St. Maries).